Here is a 239-residue protein sequence, read N- to C-terminus: Probable transcriptional regulatory protein Tcr_1104 (239 aa).

Belongs to the TACO1 family.

Its subcellular location is the cytoplasm. The protein is Probable transcriptional regulatory protein Tcr_1104 of Hydrogenovibrio crunogenus (strain DSM 25203 / XCL-2) (Thiomicrospira crunogena).